The following is a 99-amino-acid chain: A-type ATP synthase subunit F (99 aa).

The protein belongs to the V-ATPase F subunit family. In terms of assembly, has multiple subunits with at least A(3), B(3), C, D, E, F, H, I and proteolipid K(x).

Its subcellular location is the cell membrane. Its function is as follows. Component of the A-type ATP synthase that produces ATP from ADP in the presence of a proton gradient across the membrane. The polypeptide is A-type ATP synthase subunit F (Methanococcus maripaludis (strain DSM 14266 / JCM 13030 / NBRC 101832 / S2 / LL)).